We begin with the raw amino-acid sequence, 547 residues long: Chaperonin GroEL (547 aa).

Residues 30-33, lysine 51, 87-91, glycine 415, 479-481, and aspartate 495 contribute to the ATP site; these read TLGP, DGTTT, and NAA.

The protein belongs to the chaperonin (HSP60) family. In terms of assembly, forms a cylinder of 14 subunits composed of two heptameric rings stacked back-to-back. Interacts with the co-chaperonin GroES.

It localises to the cytoplasm. It carries out the reaction ATP + H2O + a folded polypeptide = ADP + phosphate + an unfolded polypeptide.. Functionally, together with its co-chaperonin GroES, plays an essential role in assisting protein folding. The GroEL-GroES system forms a nano-cage that allows encapsulation of the non-native substrate proteins and provides a physical environment optimized to promote and accelerate protein folding. In Polynucleobacter necessarius subsp. necessarius (strain STIR1), this protein is Chaperonin GroEL.